Consider the following 344-residue polypeptide: Selenide, water dikinase (344 aa).

Cysteine 16 is an active-site residue. ATP is bound by residues lysine 19 and 47–49 (SRD). Residue aspartate 50 participates in Mg(2+) binding. ATP contacts are provided by residues aspartate 67, aspartate 90, and 138–140 (GHS). Aspartate 90 is a Mg(2+) binding site. A Mg(2+)-binding site is contributed by aspartate 226.

This sequence belongs to the selenophosphate synthase 1 family. Class I subfamily. As to quaternary structure, homodimer. Requires Mg(2+) as cofactor.

The enzyme catalyses hydrogenselenide + ATP + H2O = selenophosphate + AMP + phosphate + 2 H(+). Synthesizes selenophosphate from selenide and ATP. The protein is Selenide, water dikinase of Pseudomonas putida (strain ATCC 47054 / DSM 6125 / CFBP 8728 / NCIMB 11950 / KT2440).